The sequence spans 156 residues: Small ribosomal subunit protein uS7 (156 aa).

This sequence belongs to the universal ribosomal protein uS7 family. Part of the 30S ribosomal subunit. Contacts proteins S9 and S11.

In terms of biological role, one of the primary rRNA binding proteins, it binds directly to 16S rRNA where it nucleates assembly of the head domain of the 30S subunit. Is located at the subunit interface close to the decoding center, probably blocks exit of the E-site tRNA. This is Small ribosomal subunit protein uS7 from Saccharophagus degradans (strain 2-40 / ATCC 43961 / DSM 17024).